The following is an 81-amino-acid chain: Translational regulator CsrA (81 aa).

Residues 59-71 are compositionally biased toward polar residues; sequence SQMQHLEQGNFPT. Residues 59–81 are disordered; the sequence is SQMQHLEQGNFPTSFDDDDFFNR.

This sequence belongs to the CsrA/RsmA family. As to quaternary structure, homodimer; the beta-strands of each monomer intercalate to form a hydrophobic core, while the alpha-helices form wings that extend away from the core.

It localises to the cytoplasm. Functionally, a key translational regulator that binds mRNA to regulate translation initiation and/or mRNA stability. Mediates global changes in gene expression, shifting from rapid growth to stress survival by linking envelope stress, the stringent response and the catabolite repression systems. Usually binds in the 5'-UTR; binding at or near the Shine-Dalgarno sequence prevents ribosome-binding, repressing translation, binding elsewhere in the 5'-UTR can activate translation and/or stabilize the mRNA. Its function is antagonized by small RNA(s). This is Translational regulator CsrA from Psychrobacter sp. (strain PRwf-1).